The following is an 832-amino-acid chain: Protein P (832 aa).

The interval 1–177 is terminal protein domain (TP); that stretch reads MPLSCQHFRK…FCGSPYSWEQ (177 aa). The segment at 178–335 is spacer; the sequence is ELQHGAEPFC…NCLSHIVNLL (158 aa). The tract at residues 198–264 is disordered; sequence SIGPAVPSQH…HNTASSSSSC (67 aa). Residues 336 to 679 form a polymerase/reverse transcriptase domain (RT) region; the sequence is EDWGPCTEHG…YLTLYPVARQ (344 aa). The 244-residue stretch at 346-589 folds into the Reverse transcriptase domain; that stretch reads EHLIRIPRTP…YSLHFMGYVI (244 aa). Mg(2+) contacts are provided by aspartate 418, aspartate 540, and aspartate 541.

Belongs to the hepadnaviridae P protein family.

It carries out the reaction DNA(n) + a 2'-deoxyribonucleoside 5'-triphosphate = DNA(n+1) + diphosphate. It catalyses the reaction Endonucleolytic cleavage to 5'-phosphomonoester.. Activated by host HSP70 and HSP40 in vitro to be able to bind the epsilon loop of the pgRNA. Because deletion of the RNase H region renders the protein partly chaperone-independent, the chaperones may be needed indirectly to relieve occlusion of the RNA-binding site by this domain. Inhibited by several reverse-transcriptase inhibitors: Lamivudine, Adefovir and Entecavir. In terms of biological role, multifunctional enzyme that converts the viral RNA genome into dsDNA in viral cytoplasmic capsids. This enzyme displays a DNA polymerase activity that can copy either DNA or RNA templates, and a ribonuclease H (RNase H) activity that cleaves the RNA strand of RNA-DNA heteroduplexes in a partially processive 3'- to 5'-endonucleasic mode. Neo-synthesized pregenomic RNA (pgRNA) are encapsidated together with the P protein, and reverse-transcribed inside the nucleocapsid. Initiation of reverse-transcription occurs first by binding the epsilon loop on the pgRNA genome, and is initiated by protein priming, thereby the 5'-end of (-)DNA is covalently linked to P protein. Partial (+)DNA is synthesized from the (-)DNA template and generates the relaxed circular DNA (RC-DNA) genome. After budding and infection, the RC-DNA migrates in the nucleus, and is converted into a plasmid-like covalently closed circular DNA (cccDNA). The activity of P protein does not seem to be necessary for cccDNA generation, and is presumably released from (+)DNA by host nuclear DNA repair machinery. The chain is Protein P from Pongo pygmaeus (Bornean orangutan).